A 64-amino-acid chain; its full sequence is Large ribosomal subunit protein bL35 (64 aa).

The disordered stretch occupies residues 1-56 (MPKMKSNKSVAARFKLTGSGQLKRTRPGKRHKLSKKSSQEKRNLSKQPLVDKGQVG). A compositionally biased stretch (basic residues) spans 23 to 35 (KRTRPGKRHKLSK).

This sequence belongs to the bacterial ribosomal protein bL35 family.

This Chlamydia abortus (strain DSM 27085 / S26/3) (Chlamydophila abortus) protein is Large ribosomal subunit protein bL35.